Reading from the N-terminus, the 446-residue chain is Probable cytosolic iron-sulfur protein assembly protein 1 (446 aa).

WD repeat units follow at residues 17–59 (AFKP…AHSN), 63–106 (GHTR…PLEE), 143–182 (GHEN…EGDD), 192–241 (EHDG…EWAC), 247–291 (GHSS…PEAS), 330–368 (VHTR…NPST), and 398–446 (GHGP…SIEL). Residues 106–128 (EGTKKGESTEIDVTRRRNNNDSD) are compositionally biased toward basic and acidic residues. Residues 106 to 133 (EGTKKGESTEIDVTRRRNNNDSDKDNDD) are disordered.

Belongs to the WD repeat CIA1 family.

In terms of biological role, essential component of the cytosolic iron-sulfur (Fe/S) protein assembly machinery. Required for the maturation of extramitochondrial Fe/S proteins. In Pyricularia oryzae (strain 70-15 / ATCC MYA-4617 / FGSC 8958) (Rice blast fungus), this protein is Probable cytosolic iron-sulfur protein assembly protein 1.